A 378-amino-acid chain; its full sequence is Erythronate-4-phosphate dehydrogenase (378 aa).

Substrate-binding residues include S45 and T66. NAD(+) is bound by residues D146 and T175. R208 is an active-site residue. NAD(+) is bound at residue D232. The active site involves E237. The active-site Proton donor is H254. NAD(+) is bound at residue G257. Residue Y258 coordinates substrate.

It belongs to the D-isomer specific 2-hydroxyacid dehydrogenase family. PdxB subfamily. In terms of assembly, homodimer.

It is found in the cytoplasm. The catalysed reaction is 4-phospho-D-erythronate + NAD(+) = (R)-3-hydroxy-2-oxo-4-phosphooxybutanoate + NADH + H(+). The protein operates within cofactor biosynthesis; pyridoxine 5'-phosphate biosynthesis; pyridoxine 5'-phosphate from D-erythrose 4-phosphate: step 2/5. In terms of biological role, catalyzes the oxidation of erythronate-4-phosphate to 3-hydroxy-2-oxo-4-phosphonooxybutanoate. The chain is Erythronate-4-phosphate dehydrogenase from Pectobacterium carotovorum subsp. carotovorum (strain PC1).